A 409-amino-acid chain; its full sequence is Elongation factor Tu, chloroplastic (409 aa).

Residues 10 to 214 form the tr-type G domain; that stretch reads KQHVNIGTIG…NVDTYIPTPV (205 aa). Residues 19-26 are G1; the sequence is GHVDHGKT. 19–26 provides a ligand contact to GTP; the sequence is GHVDHGKT. Thr-26 is a Mg(2+) binding site. The interval 60 to 64 is G2; that stretch reads GITIN. The segment at 81–84 is G3; the sequence is DCPG. GTP-binding positions include 81 to 85 and 136 to 139; these read DCPGH and NKED. Residues 136–139 form a G4 region; sequence NKED. The interval 174–176 is G5; that stretch reads SAL.

Belongs to the TRAFAC class translation factor GTPase superfamily. Classic translation factor GTPase family. EF-Tu/EF-1A subfamily.

It localises to the plastid. The protein localises to the chloroplast. The enzyme catalyses GTP + H2O = GDP + phosphate + H(+). Its function is as follows. GTP hydrolase that promotes the GTP-dependent binding of aminoacyl-tRNA to the A-site of ribosomes during protein biosynthesis. The sequence is that of Elongation factor Tu, chloroplastic (tufA) from Tupiella akineta (Green alga).